A 695-amino-acid polypeptide reads, in one-letter code: G-patch and R3H domain-containing protein C30B4.02c (695 aa).

6 disordered regions span residues 168-200 (SDKE…NDDS), 213-242 (DIAN…EFDI), 257-317 (FADL…FDEG), 332-351 (GNTD…DEDE), 388-448 (DSED…VAAR), and 475-517 (DKSK…DSDN). A compositionally biased stretch (basic and acidic residues) spans 182-198 (CYKEQESEKELYSKDND). Acidic residues-rich tracts occupy residues 262 to 286 (VLEE…EEEE), 307 to 317 (EDSESLEFDEG), and 337 to 351 (LAED…DEDE). Positions 421 to 434 (KKDRKLPKKMRKAQ) are enriched in basic residues. One can recognise an R3H domain in the interval 525-587 (KIFINDVYQR…KRYTMLSKTH (63 aa)). The G-patch domain maps to 652–695 (KENPGRRLLEKLGWYAGKGLGHPENEGSKDSLRAIVKVSRSGLG).

It is found in the cytoplasm. This Schizosaccharomyces pombe (strain 972 / ATCC 24843) (Fission yeast) protein is G-patch and R3H domain-containing protein C30B4.02c.